The primary structure comprises 234 residues: Flagellar L-ring protein (234 aa).

Positions 1-15 are cleaved as a signal peptide; sequence MRYAVICMLLLAASG. Residue Cys16 is the site of N-palmitoyl cysteine attachment. Cys16 carries S-diacylglycerol cysteine lipidation.

The protein belongs to the FlgH family. In terms of assembly, the basal body constitutes a major portion of the flagellar organelle and consists of four rings (L,P,S, and M) mounted on a central rod.

The protein resides in the cell outer membrane. It is found in the bacterial flagellum basal body. Functionally, assembles around the rod to form the L-ring and probably protects the motor/basal body from shearing forces during rotation. This Oleidesulfovibrio alaskensis (strain ATCC BAA-1058 / DSM 17464 / G20) (Desulfovibrio alaskensis) protein is Flagellar L-ring protein.